We begin with the raw amino-acid sequence, 155 residues long: MRRRRAEIRKVPPDPIYNDVLVSKLINRVMWDGKKSIAQKIVYKAMEILAEKTKKAPLEALHQAIENVRPIVEVRPRRVGGATYQVPIEVQEPRKTSLALRWIVEAARAKKGRPMAEKLGEELVNAFNNTGTAIKKKEDVHRMAEANRAFAHFRW.

Belongs to the universal ribosomal protein uS7 family. Part of the 30S ribosomal subunit. Contacts proteins S9 and S11.

In terms of biological role, one of the primary rRNA binding proteins, it binds directly to 16S rRNA where it nucleates assembly of the head domain of the 30S subunit. Is located at the subunit interface close to the decoding center, probably blocks exit of the E-site tRNA. The sequence is that of Small ribosomal subunit protein uS7 from Thermosipho melanesiensis (strain DSM 12029 / CIP 104789 / BI429).